A 756-amino-acid polypeptide reads, in one-letter code: Photosystem I P700 chlorophyll a apoprotein A1 (756 aa).

8 helical membrane passes run 73 to 96 (IFSAHFGHLAVIFVWLSGMYFHGA), 159 to 182 (LYVTAIGGLVMAGLMLFAGWFHYH), 198 to 222 (MNHHLAGLLGLGSLGWAGHQIHVSL), 298 to 316 (TAHHHLAIAVLFIIAGHMY), 353 to 376 (WHAQLAINLAMMGSLSIIVAHHMY), 392 to 418 (LSLFTHHMWIGGFLIVGGAAHGAIYMV), 440 to 462 (AIISHLNWVCIFLGFHSFGLYIH), and 537 to 555 (FLVHHIHAFTIHVTVLILL). Positions 579 and 588 each coordinate [4Fe-4S] cluster. Transmembrane regions (helical) follow at residues 595–616 (HVFLGLFWMYNSLSIVIFHFSW) and 670–692 (LSAYGLLFLGAHFVWAFSLMFLF). H681 is a binding site for chlorophyll a'. The chlorophyll a site is built by M689 and Y697. W698 lines the phylloquinone pocket. Residues 730–750 (AVGVAHYLLGGIATTWAFFLA) form a helical membrane-spanning segment.

Belongs to the PsaA/PsaB family. The PsaA/B heterodimer binds the P700 chlorophyll special pair and subsequent electron acceptors. PSI consists of a core antenna complex that captures photons, and an electron transfer chain that converts photonic excitation into a charge separation. The cyanobacterial PSI reaction center is composed of one copy each of PsaA,B,C,D,E,F,I,J,K,L,M and X, and forms trimeric complexes. It depends on PSI electron transfer chain: 5 chlorophyll a, 1 chlorophyll a', 2 phylloquinones and 3 4Fe-4S clusters. PSI core antenna: 90 chlorophyll a, 22 carotenoids, 3 phospholipids and 1 galactolipid. P700 is a chlorophyll a/chlorophyll a' dimer, A0 is one or more chlorophyll a, A1 is one or both phylloquinones and FX is a shared 4Fe-4S iron-sulfur center. as a cofactor.

It localises to the cellular thylakoid membrane. It carries out the reaction reduced [plastocyanin] + hnu + oxidized [2Fe-2S]-[ferredoxin] = oxidized [plastocyanin] + reduced [2Fe-2S]-[ferredoxin]. In terms of biological role, psaA and PsaB bind P700, the primary electron donor of photosystem I (PSI), as well as the electron acceptors A0, A1 and FX. PSI is a plastocyanin/cytochrome c6-ferredoxin oxidoreductase, converting photonic excitation into a charge separation, which transfers an electron from the donor P700 chlorophyll pair to the spectroscopically characterized acceptors A0, A1, FX, FA and FB in turn. Oxidized P700 is reduced on the lumenal side of the thylakoid membrane by plastocyanin or cytochrome c6. In Cyanothece sp. (strain PCC 7425 / ATCC 29141), this protein is Photosystem I P700 chlorophyll a apoprotein A1.